We begin with the raw amino-acid sequence, 348 residues long: Phenylalanine--tRNA ligase alpha subunit (348 aa).

Residue Glu262 coordinates Mg(2+).

This sequence belongs to the class-II aminoacyl-tRNA synthetase family. Phe-tRNA synthetase alpha subunit type 1 subfamily. As to quaternary structure, tetramer of two alpha and two beta subunits. Requires Mg(2+) as cofactor.

The protein resides in the cytoplasm. It carries out the reaction tRNA(Phe) + L-phenylalanine + ATP = L-phenylalanyl-tRNA(Phe) + AMP + diphosphate + H(+). The protein is Phenylalanine--tRNA ligase alpha subunit of Streptococcus pneumoniae serotype 2 (strain D39 / NCTC 7466).